Reading from the N-terminus, the 272-residue chain is MLLAIDVRNTHTVVGLLSGAKQHAKVVQQWRIRTESEVTADELALTIDGLIGEDSERLTGATGLSTVPSVLHEVRIMLEQYWPSVPHVLIEPGVRTGIPLLVDNPKEVGADRIVNCLAAYQQFAKAAIVVDFGSSICVDVVSAKGEFLGGAIAPGVQVSSDAAAARSAALRRVELARPRSVVGKNTVECMQAGAVFGFAGLVDGLVARIREDVKGFSADDDVAVVATGHTAPLLLPELHSVEHFDEHLTLHGLRLVFERNREAQRGRLKPAR.

Residue 6–13 (DVRNTHTV) coordinates ATP. 109-112 (GADR) serves as a coordination point for substrate. Residue D111 is the Proton acceptor of the active site. D131 lines the K(+) pocket. Residue S134 participates in ATP binding. T186 serves as a coordination point for substrate.

It belongs to the type III pantothenate kinase family. As to quaternary structure, homodimer. Requires NH4(+) as cofactor. K(+) is required as a cofactor.

The protein resides in the cytoplasm. It carries out the reaction (R)-pantothenate + ATP = (R)-4'-phosphopantothenate + ADP + H(+). The protein operates within cofactor biosynthesis; coenzyme A biosynthesis; CoA from (R)-pantothenate: step 1/5. In terms of biological role, catalyzes the phosphorylation of pantothenate (Pan), the first step in CoA biosynthesis. In Mycobacterium marinum (strain ATCC BAA-535 / M), this protein is Type III pantothenate kinase.